Here is a 334-residue protein sequence, read N- to C-terminus: Holliday junction branch migration complex subunit RuvB (334 aa).

A large ATPase domain (RuvB-L) region spans residues 4–184 (ADRLIQPQIQ…FGIPLRLEFY (181 aa)). ATP is bound by residues arginine 24, glycine 65, lysine 68, threonine 69, threonine 70, 131 to 133 (EDY), arginine 174, tyrosine 184, and arginine 221. A Mg(2+)-binding site is contributed by threonine 69. The segment at 185–255 (NIKDLSTIVT…VAEHALDLLD (71 aa)) is small ATPAse domain (RuvB-S). Residues 258 to 334 (SEGFDYMDRK…YQHFELIKPE (77 aa)) form a head domain (RuvB-H) region. DNA contacts are provided by arginine 294, arginine 313, and arginine 318.

The protein belongs to the RuvB family. In terms of assembly, homohexamer. Forms an RuvA(8)-RuvB(12)-Holliday junction (HJ) complex. HJ DNA is sandwiched between 2 RuvA tetramers; dsDNA enters through RuvA and exits via RuvB. An RuvB hexamer assembles on each DNA strand where it exits the tetramer. Each RuvB hexamer is contacted by two RuvA subunits (via domain III) on 2 adjacent RuvB subunits; this complex drives branch migration. In the full resolvosome a probable DNA-RuvA(4)-RuvB(12)-RuvC(2) complex forms which resolves the HJ.

It localises to the cytoplasm. The catalysed reaction is ATP + H2O = ADP + phosphate + H(+). In terms of biological role, the RuvA-RuvB-RuvC complex processes Holliday junction (HJ) DNA during genetic recombination and DNA repair, while the RuvA-RuvB complex plays an important role in the rescue of blocked DNA replication forks via replication fork reversal (RFR). RuvA specifically binds to HJ cruciform DNA, conferring on it an open structure. The RuvB hexamer acts as an ATP-dependent pump, pulling dsDNA into and through the RuvAB complex. RuvB forms 2 homohexamers on either side of HJ DNA bound by 1 or 2 RuvA tetramers; 4 subunits per hexamer contact DNA at a time. Coordinated motions by a converter formed by DNA-disengaged RuvB subunits stimulates ATP hydrolysis and nucleotide exchange. Immobilization of the converter enables RuvB to convert the ATP-contained energy into a lever motion, pulling 2 nucleotides of DNA out of the RuvA tetramer per ATP hydrolyzed, thus driving DNA branch migration. The RuvB motors rotate together with the DNA substrate, which together with the progressing nucleotide cycle form the mechanistic basis for DNA recombination by continuous HJ branch migration. Branch migration allows RuvC to scan DNA until it finds its consensus sequence, where it cleaves and resolves cruciform DNA. This chain is Holliday junction branch migration complex subunit RuvB, found in Shewanella baltica (strain OS195).